Here is a 280-residue protein sequence, read N- to C-terminus: Ribosomal RNA small subunit methyltransferase A (280 aa).

Residues Leu-24, Gly-49, Glu-70, Asp-95, and Asn-118 each contribute to the S-adenosyl-L-methionine site.

The protein belongs to the class I-like SAM-binding methyltransferase superfamily. rRNA adenine N(6)-methyltransferase family. RsmA subfamily.

The protein resides in the cytoplasm. It catalyses the reaction adenosine(1518)/adenosine(1519) in 16S rRNA + 4 S-adenosyl-L-methionine = N(6)-dimethyladenosine(1518)/N(6)-dimethyladenosine(1519) in 16S rRNA + 4 S-adenosyl-L-homocysteine + 4 H(+). Functionally, specifically dimethylates two adjacent adenosines (A1518 and A1519) in the loop of a conserved hairpin near the 3'-end of 16S rRNA in the 30S particle. May play a critical role in biogenesis of 30S subunits. The chain is Ribosomal RNA small subunit methyltransferase A from Syntrophus aciditrophicus (strain SB).